Reading from the N-terminus, the 273-residue chain is Proteasome subunit beta type-10 (273 aa).

Position 1 is an N-acetylmethionine (methionine 1). Positions 1 to 39 (MLKQAVEPTGGFSFENCQRNASLEHVLPGLRVPHARKTG) are cleaved as a propeptide — removed in mature form. The active-site Nucleophile is the threonine 40.

This sequence belongs to the peptidase T1B family. As to quaternary structure, the 26S proteasome consists of a 20S proteasome core and two 19S regulatory subunits. The 20S proteasome core is composed of 28 subunits that are arranged in four stacked rings, resulting in a barrel-shaped structure. The two end rings are each formed by seven alpha subunits, and the two central rings are each formed by seven beta subunits. The catalytic chamber with the active sites is on the inside of the barrel. Component of the immunoproteasome, where it displaces the equivalent housekeeping subunit PSMB7. Component of the spermatoproteasome, a form of the proteasome specifically found in testis. Autocleaved. The resulting N-terminal Thr residue of the mature subunit is responsible for the nucleophile proteolytic activity. Detected in liver (at protein level).

The protein localises to the cytoplasm. The protein resides in the nucleus. The catalysed reaction is Cleavage of peptide bonds with very broad specificity.. Functionally, the proteasome is a multicatalytic proteinase complex which is characterized by its ability to cleave peptides with Arg, Phe, Tyr, Leu, and Glu adjacent to the leaving group at neutral or slightly basic pH. The proteasome has an ATP-dependent proteolytic activity. This subunit is involved in antigen processing to generate class I binding peptides. Plays a role in determining the T-cell repertoire for an antiviral T-cell response. The polypeptide is Proteasome subunit beta type-10 (Psmb10) (Mus musculus (Mouse)).